The primary structure comprises 353 residues: UPF0283 membrane protein YcjF (353 aa).

The span at 1-19 shows a compositional bias: basic and acidic residues; the sequence is MSEPLKPRIDFAEPLKEEP. The segment at 1–35 is disordered; the sequence is MSEPLKPRIDFAEPLKEEPTSAFKAQQTFSEAESR. The next 3 helical transmembrane spans lie at 70-90, 100-120, and 213-233; these read MVMG…VQWT, VALG…GSVV, and ESTL…FIAW.

The protein belongs to the UPF0283 family.

It localises to the cell inner membrane. The protein is UPF0283 membrane protein YcjF of Salmonella paratyphi C (strain RKS4594).